The chain runs to 495 residues: Fibronectin type III and SPRY domain-containing protein 1 (495 aa).

A coiled-coil region spans residues 4-99 (QKESLRKIIT…ALESSEELLE (96 aa)). Residues 105 to 162 (LCSSENDSFTQAAKDIKDSVTMAPAFRLSLKAKASDSMNHMMVDFTHERNLLQSITFL) form the COS domain. The region spanning 164–268 (VPATPEIHVA…EPVTLETHAF (105 aa)) is the Fibronectin type-III domain. A B30.2/SPRY domain is found at 281 to 476 (LKVEDLSVEW…VQTGLQVPSI (196 aa)). The tract at residues 306–332 (KNRTNSPMHSPARTAMMSPKRAPSARV) is disordered. Ser-490 carries the phosphoserine modification.

Oligomerization is required for binding to microtubules.

The protein localises to the cytoplasm. The protein resides in the cytoskeleton. Its subcellular location is the microtubule organizing center. It localises to the centrosome. It is found in the nucleus. The protein localises to the cleavage furrow. In terms of biological role, may be involved in microtubule organization and stabilization. The chain is Fibronectin type III and SPRY domain-containing protein 1 (fsd1) from Danio rerio (Zebrafish).